Here is a 302-residue protein sequence, read N- to C-terminus: Acidic endochitinase (302 aa).

The first 30 residues, 1-30 (MTNMTLRKHVIYFLFFISCSLSKPSDASRG), serve as a signal peptide directing secretion. Positions 31–302 (GIAIYWGQNG…GYSSSILASV (272 aa)) constitute a GH18 domain. 2 disulfides stabilise this stretch: C49–C96 and C79–C86. E156 (proton donor) is an active-site residue. C188 and C217 are disulfide-bonded.

It belongs to the glycosyl hydrolase 18 family. Chitinase class III subfamily.

It localises to the secreted. The protein localises to the extracellular space. It catalyses the reaction Random endo-hydrolysis of N-acetyl-beta-D-glucosaminide (1-&gt;4)-beta-linkages in chitin and chitodextrins.. Functionally, this protein functions as a defense against chitin containing fungal pathogens. This is Acidic endochitinase (CHIB1) from Arabidopsis thaliana (Mouse-ear cress).